A 410-amino-acid chain; its full sequence is Protein LTV1 homolog (410 aa).

Disordered regions lie at residues valine 142–tyrosine 165 and glutamate 325–leucine 378. Composition is skewed to acidic residues over residues aspartate 151 to tyrosine 165 and glutamate 325 to lysine 345. A compositionally biased stretch (basic and acidic residues) spans proline 357–serine 366. Positions glutamate 363 to methionine 389 form a coiled coil. A compositionally biased stretch (basic residues) spans leucine 367–leucine 378.

The protein belongs to the LTV1 family.

In Caenorhabditis elegans, this protein is Protein LTV1 homolog.